A 276-amino-acid chain; its full sequence is Pantothenate synthetase (276 aa).

Residue 27 to 34 (MGALHKGH) participates in ATP binding. His34 (proton donor) is an active-site residue. Position 58 (Gln58) interacts with (R)-pantoate. Gln58 is a beta-alanine binding site. 147–150 (GKKD) serves as a coordination point for ATP. Gln153 provides a ligand contact to (R)-pantoate. ATP is bound by residues Val176 and 184-187 (LSSR).

It belongs to the pantothenate synthetase family. Homodimer.

The protein localises to the cytoplasm. The catalysed reaction is (R)-pantoate + beta-alanine + ATP = (R)-pantothenate + AMP + diphosphate + H(+). It participates in cofactor biosynthesis; (R)-pantothenate biosynthesis; (R)-pantothenate from (R)-pantoate and beta-alanine: step 1/1. Catalyzes the condensation of pantoate with beta-alanine in an ATP-dependent reaction via a pantoyl-adenylate intermediate. In Helicobacter pylori (strain ATCC 700392 / 26695) (Campylobacter pylori), this protein is Pantothenate synthetase.